A 500-amino-acid polypeptide reads, in one-letter code: Centrosomal protein of 57 kDa (500 aa).

A compositionally biased stretch (low complexity) spans Met-1 to Ser-17. Disordered regions lie at residues Met-1 to Ser-34 and Lys-43 to Pro-62. The segment covering Phe-18 to Ser-34 has biased composition (polar residues). Phosphoserine occurs at positions 53 and 55. Residues Thr-58–Glu-239 are centrosome localization domain (CLD). Coiled-coil stretches lie at residues Glu-63–Arg-242 and Glu-392–Gln-492. The tract at residues Gly-277–Leu-491 is mediates interaction with microtubules. Basic and acidic residues predominate over residues Lys-434–Ser-450. The tract at residues Lys-434–Glu-472 is disordered. A compositionally biased stretch (polar residues) spans Ser-451–Thr-460. The span at Asn-461 to Gly-471 shows a compositional bias: basic and acidic residues.

It belongs to the translokin family. As to quaternary structure, homodimer and homooligomer. Interacts with microtubules. Interacts with FGF2 and RAP80. Does not interact with FGF1 or FGF2 isoform 24 kDa. As to expression, ubiquitous.

It localises to the nucleus. The protein localises to the cytoplasm. The protein resides in the cytoskeleton. Its subcellular location is the microtubule organizing center. It is found in the centrosome. Centrosomal protein which may be required for microtubule attachment to centrosomes. May act by forming ring-like structures around microtubules. Mediates nuclear translocation and mitogenic activity of the internalized growth factor FGF2, but that of FGF1. The sequence is that of Centrosomal protein of 57 kDa (CEP57) from Homo sapiens (Human).